We begin with the raw amino-acid sequence, 20 residues long: Non-specific lipid-transfer protein-like protein (20 aa).

This sequence belongs to the plant LTP family.

In Jatropha curcas (Barbados nut), this protein is Non-specific lipid-transfer protein-like protein.